Consider the following 386-residue polypeptide: Patatin-2-Kuras 2 (386 aa).

Residues 1 to 23 form the signal peptide; sequence MATTKSFLILFFMILATTSSTCA. The 198-residue stretch at 32 to 229 folds into the PNPLA domain; sequence LSIDGGGIKG…TVGDPALLSL (198 aa). A GXGXXG motif is present at residues 36–41; it reads GGGIKG. A GXSXG motif is present at residues 75–79; that stretch reads GTSTG. The active-site Nucleophile is the S77. N115 carries an N-linked (GlcNAc...) asparagine glycan. Residue D215 is the Proton acceptor of the active site. The short motif at 215 to 217 is the DGA/G element; the sequence is DGA. Residues 321-384 are a coiled coil; the sequence is ENALTGTTTE…DRKKLRANKA (64 aa).

The protein belongs to the patatin family.

It is found in the vacuole. Functionally, probable lipolytic acyl hydrolase (LAH), an activity which is thought to be involved in the response of tubers to pathogens. The chain is Patatin-2-Kuras 2 (pat2-k2) from Solanum tuberosum (Potato).